We begin with the raw amino-acid sequence, 156 residues long: MPRRRVIGQRKILPDPKFGSELLAKFVNILMVDGKKSTAESIVYNALETLAQRSGKTELEAFEIALDNVRPTVEVKSRRVGGSTYQVPVEVRPVRRNALAMRWIVEAARKRGDKSMALRLANELSDAAENKGAAVKKREDVHRMADANKAFAHYRW.

It belongs to the universal ribosomal protein uS7 family. In terms of assembly, part of the 30S ribosomal subunit. Contacts proteins S9 and S11.

Its function is as follows. One of the primary rRNA binding proteins, it binds directly to 16S rRNA where it nucleates assembly of the head domain of the 30S subunit. Is located at the subunit interface close to the decoding center, probably blocks exit of the E-site tRNA. This is Small ribosomal subunit protein uS7 from Proteus mirabilis (strain HI4320).